Reading from the N-terminus, the 160-residue chain is Class B acid phosphatase (160 aa).

A signal peptide spans 1–23; that stretch reads MRKVTLTLSAIALALSLNGAAMA. The active-site Nucleophile is the D69. Mg(2+) is bound by residues D69 and D71. The Proton donor role is filled by D71. 137–138 provides a ligand contact to substrate; that stretch reads TG.

It belongs to the class B bacterial acid phosphatase family. As to quaternary structure, homotetramer. Mg(2+) is required as a cofactor.

The protein resides in the periplasm. It catalyses the reaction a phosphate monoester + H2O = an alcohol + phosphate. In terms of biological role, dephosphorylates several organic phosphate monoesters. Also has a phosphotransferase activity catalyzing the transfer of low-energy phosphate groups from organic phosphate monoesters to free hydroxyl groups of various organic compounds. The sequence is that of Class B acid phosphatase (aphA) from Proteus mirabilis.